A 1399-amino-acid chain; its full sequence is DNA-directed RNA polymerase subunit beta' (1399 aa).

Zn(2+)-binding residues include cysteine 71, cysteine 73, cysteine 86, and cysteine 89. The Mg(2+) site is built by aspartate 462, aspartate 464, and aspartate 466. Zn(2+) is bound by residues cysteine 810, cysteine 884, cysteine 891, and cysteine 894.

The protein belongs to the RNA polymerase beta' chain family. In terms of assembly, the RNAP catalytic core consists of 2 alpha, 1 beta, 1 beta' and 1 omega subunit. When a sigma factor is associated with the core the holoenzyme is formed, which can initiate transcription. Requires Mg(2+) as cofactor. Zn(2+) is required as a cofactor.

It catalyses the reaction RNA(n) + a ribonucleoside 5'-triphosphate = RNA(n+1) + diphosphate. Functionally, DNA-dependent RNA polymerase catalyzes the transcription of DNA into RNA using the four ribonucleoside triphosphates as substrates. This is DNA-directed RNA polymerase subunit beta' from Chelativorans sp. (strain BNC1).